The primary structure comprises 120 residues: Large ribosomal subunit protein eL8 (120 aa).

It belongs to the eukaryotic ribosomal protein eL8 family. Part of the 50S ribosomal subunit. Probably part of the RNase P complex.

The protein localises to the cytoplasm. Functionally, multifunctional RNA-binding protein that recognizes the K-turn motif in ribosomal RNA, the RNA component of RNase P, box H/ACA, box C/D and box C'/D' sRNAs. This is Large ribosomal subunit protein eL8 from Natronomonas pharaonis (strain ATCC 35678 / DSM 2160 / CIP 103997 / JCM 8858 / NBRC 14720 / NCIMB 2260 / Gabara) (Halobacterium pharaonis).